A 194-amino-acid chain; its full sequence is Adenylate kinase (194 aa).

Residue 8 to 16 (GIPGVGKTT) participates in ATP binding.

The protein belongs to the archaeal adenylate kinase family.

The protein localises to the cytoplasm. It catalyses the reaction AMP + ATP = 2 ADP. The chain is Adenylate kinase (adkA) from Sulfurisphaera tokodaii (strain DSM 16993 / JCM 10545 / NBRC 100140 / 7) (Sulfolobus tokodaii).